We begin with the raw amino-acid sequence, 139 residues long: Large ribosomal subunit protein uL16 (139 aa).

Over residues 1–20 (MLIPRRVKHRKQHHPKRRGM) the composition is skewed to basic residues. The tract at residues 1-22 (MLIPRRVKHRKQHHPKRRGMAK) is disordered.

Belongs to the universal ribosomal protein uL16 family. In terms of assembly, part of the 50S ribosomal subunit.

Functionally, binds 23S rRNA and is also seen to make contacts with the A and possibly P site tRNAs. The sequence is that of Large ribosomal subunit protein uL16 from Streptomyces coelicolor (strain ATCC BAA-471 / A3(2) / M145).